An 84-amino-acid polypeptide reads, in one-letter code: Minor capsid protein P30 (84 aa).

As to quaternary structure, dimer.

The protein resides in the virion. In terms of biological role, minor capsid protein essential for stable capsid assembly of complete particles. The chain is Minor capsid protein P30 (XXX) from Enterobacteria phage PRD1 (Bacteriophage PRD1).